An 879-amino-acid polypeptide reads, in one-letter code: Valine--tRNA ligase (879 aa).

Positions 45–55 (PNVTGKLHLGH) match the 'HIGH' region motif. The short motif at 521–525 (KMSKS) is the 'KMSKS' region element. ATP is bound at residue lysine 524. A coiled-coil region spans residues 806–879 (LTELVNVDEE…ERMKELKESK (74 aa)).

This sequence belongs to the class-I aminoacyl-tRNA synthetase family. ValS type 1 subfamily. As to quaternary structure, monomer.

Its subcellular location is the cytoplasm. The enzyme catalyses tRNA(Val) + L-valine + ATP = L-valyl-tRNA(Val) + AMP + diphosphate. Catalyzes the attachment of valine to tRNA(Val). As ValRS can inadvertently accommodate and process structurally similar amino acids such as threonine, to avoid such errors, it has a 'posttransfer' editing activity that hydrolyzes mischarged Thr-tRNA(Val) in a tRNA-dependent manner. The polypeptide is Valine--tRNA ligase (Lactobacillus johnsonii (strain CNCM I-12250 / La1 / NCC 533)).